Here is a 361-residue protein sequence, read N- to C-terminus: Putative agmatine deiminase (361 aa).

The active-site Amidino-cysteine intermediate is the Cys354.

Belongs to the agmatine deiminase family.

It catalyses the reaction agmatine + H2O = N-carbamoylputrescine + NH4(+). This Streptococcus pneumoniae (strain Hungary19A-6) protein is Putative agmatine deiminase.